The sequence spans 430 residues: Enolase (430 aa).

Gln163 is a binding site for (2R)-2-phosphoglycerate. The active-site Proton donor is Glu205. Residues Asp242, Glu285, and Asp312 each coordinate Mg(2+). (2R)-2-phosphoglycerate contacts are provided by Lys337, Arg366, Ser367, and Lys388. Lys337 acts as the Proton acceptor in catalysis.

Belongs to the enolase family. It depends on Mg(2+) as a cofactor.

The protein localises to the cytoplasm. The protein resides in the secreted. Its subcellular location is the cell surface. The catalysed reaction is (2R)-2-phosphoglycerate = phosphoenolpyruvate + H2O. Its pathway is carbohydrate degradation; glycolysis; pyruvate from D-glyceraldehyde 3-phosphate: step 4/5. Its function is as follows. Catalyzes the reversible conversion of 2-phosphoglycerate (2-PG) into phosphoenolpyruvate (PEP). It is essential for the degradation of carbohydrates via glycolysis. In Rhodopseudomonas palustris (strain BisB18), this protein is Enolase.